Reading from the N-terminus, the 92-residue chain is Small ribosomal subunit protein uS17 (92 aa).

The protein belongs to the universal ribosomal protein uS17 family. As to quaternary structure, part of the 30S ribosomal subunit.

Its function is as follows. One of the primary rRNA binding proteins, it binds specifically to the 5'-end of 16S ribosomal RNA. This chain is Small ribosomal subunit protein uS17, found in Bordetella petrii (strain ATCC BAA-461 / DSM 12804 / CCUG 43448).